A 187-amino-acid chain; its full sequence is Threonylcarbamoyl-AMP synthase (187 aa).

Positions 4-187 (ILTLDNAVAT…DARSGQILRD (184 aa)) constitute a YrdC-like domain.

It belongs to the SUA5 family. TsaC subfamily.

It is found in the cytoplasm. It catalyses the reaction L-threonine + hydrogencarbonate + ATP = L-threonylcarbamoyladenylate + diphosphate + H2O. Functionally, required for the formation of a threonylcarbamoyl group on adenosine at position 37 (t(6)A37) in tRNAs that read codons beginning with adenine. Catalyzes the conversion of L-threonine, HCO(3)(-)/CO(2) and ATP to give threonylcarbamoyl-AMP (TC-AMP) as the acyladenylate intermediate, with the release of diphosphate. In Xanthomonas oryzae pv. oryzae (strain MAFF 311018), this protein is Threonylcarbamoyl-AMP synthase.